A 534-amino-acid chain; its full sequence is Light-independent protochlorophyllide reductase subunit B (534 aa).

Asp-36 contacts [4Fe-4S] cluster. The active-site Proton donor is Asp-274. 409-410 (GL) contacts substrate. Positions 426-446 (DEAGPSHHGGKAVPASAPRAD) are disordered.

It belongs to the ChlB/BchB/BchZ family. Protochlorophyllide reductase is composed of three subunits; BchL, BchN and BchB. Forms a heterotetramer of two BchB and two BchN subunits. It depends on [4Fe-4S] cluster as a cofactor.

The catalysed reaction is chlorophyllide a + oxidized 2[4Fe-4S]-[ferredoxin] + 2 ADP + 2 phosphate = protochlorophyllide a + reduced 2[4Fe-4S]-[ferredoxin] + 2 ATP + 2 H2O. It participates in porphyrin-containing compound metabolism; bacteriochlorophyll biosynthesis (light-independent). Functionally, component of the dark-operative protochlorophyllide reductase (DPOR) that uses Mg-ATP and reduced ferredoxin to reduce ring D of protochlorophyllide (Pchlide) to form chlorophyllide a (Chlide). This reaction is light-independent. The NB-protein (BchN-BchB) is the catalytic component of the complex. The chain is Light-independent protochlorophyllide reductase subunit B from Cereibacter sphaeroides (strain ATCC 17029 / ATH 2.4.9) (Rhodobacter sphaeroides).